A 129-amino-acid chain; its full sequence is Large ribosomal subunit protein bL12 (129 aa).

Belongs to the bacterial ribosomal protein bL12 family. In terms of assembly, homodimer. Part of the ribosomal stalk of the 50S ribosomal subunit. Forms a multimeric L10(L12)X complex, where L10 forms an elongated spine to which 2 to 4 L12 dimers bind in a sequential fashion. Binds GTP-bound translation factors.

Functionally, forms part of the ribosomal stalk which helps the ribosome interact with GTP-bound translation factors. Is thus essential for accurate translation. This chain is Large ribosomal subunit protein bL12, found in Micrococcus luteus (strain ATCC 4698 / DSM 20030 / JCM 1464 / CCM 169 / CCUG 5858 / IAM 1056 / NBRC 3333 / NCIMB 9278 / NCTC 2665 / VKM Ac-2230) (Micrococcus lysodeikticus).